Here is a 339-residue protein sequence, read N- to C-terminus: NADH-quinone oxidoreductase subunit H (339 aa).

The next 9 helical transmembrane spans lie at 10 to 30 (FPLT…ILCV), 50 to 70 (PNVV…KLLF), 82 to 102 (ILFI…WAVI), 115 to 135 (VGVL…IIAG), 155 to 175 (ISYE…TGTL), 187 to 207 (LPWW…ISVL), 235 to 255 (MGFA…SAMT), 275 to 295 (IPGF…FLWI), and 311 to 331 (GWKV…SVLF).

It belongs to the complex I subunit 1 family. NDH-1 is composed of 14 different subunits. Subunits NuoA, H, J, K, L, M, N constitute the membrane sector of the complex.

It localises to the cell inner membrane. It catalyses the reaction a quinone + NADH + 5 H(+)(in) = a quinol + NAD(+) + 4 H(+)(out). NDH-1 shuttles electrons from NADH, via FMN and iron-sulfur (Fe-S) centers, to quinones in the respiratory chain. The immediate electron acceptor for the enzyme in this species is believed to be ubiquinone. Couples the redox reaction to proton translocation (for every two electrons transferred, four hydrogen ions are translocated across the cytoplasmic membrane), and thus conserves the redox energy in a proton gradient. This subunit may bind ubiquinone. This Rickettsia typhi (strain ATCC VR-144 / Wilmington) protein is NADH-quinone oxidoreductase subunit H.